Here is a 154-residue protein sequence, read N- to C-terminus: Large ribosomal subunit protein uL13 (154 aa).

This sequence belongs to the universal ribosomal protein uL13 family. As to quaternary structure, part of the 50S ribosomal subunit.

In terms of biological role, this protein is one of the early assembly proteins of the 50S ribosomal subunit, although it is not seen to bind rRNA by itself. It is important during the early stages of 50S assembly. The polypeptide is Large ribosomal subunit protein uL13 (Rhizobium etli (strain CIAT 652)).